The primary structure comprises 669 residues: NAD-dependent malic enzyme, mitochondrial (669 aa).

Positions 33–43 (IQQSRLYSSNT) are enriched in polar residues. A disordered region spans residues 33–68 (IQQSRLYSSNTRSHKATTTRENTFQKPYSDEEVTKT). Arg142 contacts fumarate. The Proton donor role is filled by Tyr187. Lys259 functions as the Proton acceptor in the catalytic mechanism. Residues Glu330, Asp331, and Asp354 each contribute to the a divalent metal cation site. NAD(+) contacts are provided by Ala387 and Ala390. (S)-malate is bound by residues Asn499 and Asn539.

Belongs to the malic enzymes family. It depends on Mg(2+) as a cofactor. Requires Mn(2+) as cofactor.

It localises to the mitochondrion matrix. It carries out the reaction (S)-malate + NAD(+) = pyruvate + CO2 + NADH. It catalyses the reaction oxaloacetate + H(+) = pyruvate + CO2. Functionally, NAD-dependent mitochondrial malic enzyme that catalyzes the oxidative decarboxylation of malate to pyruvate. This Saccharomyces cerevisiae (strain ATCC 204508 / S288c) (Baker's yeast) protein is NAD-dependent malic enzyme, mitochondrial (MAE1).